The primary structure comprises 245 residues: uncharacterized protein (245 aa).

The next 4 helical transmembrane spans lie at 10 to 30 (FYTL…SPWY), 94 to 114 (TLAF…YVHI), 134 to 154 (VLIG…FLII), and 196 to 216 (RGWI…IYCW).

The protein resides in the membrane. This is an uncharacterized protein from Dictyostelium discoideum (Social amoeba).